A 387-amino-acid polypeptide reads, in one-letter code: MEKVVIVDAVRTPMGRSKGGAFRQVRAEDLSAHLMRSLLSRNAALDAREIDDIYWGCVQQTLEQGFNVARNAALLAEIPMNVPATTVNRLCGSSMQALHDAARTIMVGDADVCLIGGVEHMGHVPMNHGVDFHPGLSRTIAKAAGMMGLTAEMLGRMHNISREMQDQFAARSHQRAHHATQSGAFRHEIIPTAGHDADGALQRFDYDEVIRPDTTVDSLAALKPAFDPVNGTVTAGSSSALSDGAAAMLIMSESRAASLGLPVRARIRAMAVVGCDPSIMGYGPVPATKLALKRAGLSLSDIGLFELNEAFAAQTLPCIKDLGLLEQIDEKVNLNGGAIALGHPLGCSGARISTTLINLMESRDVQFGVATMCIGLGQGIATVFERV.

The Acyl-thioester intermediate role is filled by Cys91. Active-site proton acceptor residues include His343 and Cys373.

The protein belongs to the thiolase-like superfamily. Thiolase family. In terms of assembly, heterotetramer of two alpha chains (FadB) and two beta chains (FadA).

Its subcellular location is the cytoplasm. The enzyme catalyses an acyl-CoA + acetyl-CoA = a 3-oxoacyl-CoA + CoA. Its pathway is lipid metabolism; fatty acid beta-oxidation. Its function is as follows. Catalyzes the final step of fatty acid oxidation in which acetyl-CoA is released and the CoA ester of a fatty acid two carbons shorter is formed. The polypeptide is 3-ketoacyl-CoA thiolase (Pectobacterium carotovorum subsp. carotovorum (strain PC1)).